A 173-amino-acid polypeptide reads, in one-letter code: Adenine phosphoribosyltransferase (173 aa).

Belongs to the purine/pyrimidine phosphoribosyltransferase family. As to quaternary structure, homodimer.

It localises to the cytoplasm. It catalyses the reaction AMP + diphosphate = 5-phospho-alpha-D-ribose 1-diphosphate + adenine. It participates in purine metabolism; AMP biosynthesis via salvage pathway; AMP from adenine: step 1/1. Catalyzes a salvage reaction resulting in the formation of AMP, that is energically less costly than de novo synthesis. The polypeptide is Adenine phosphoribosyltransferase (Caldanaerobacter subterraneus subsp. tengcongensis (strain DSM 15242 / JCM 11007 / NBRC 100824 / MB4) (Thermoanaerobacter tengcongensis)).